A 98-amino-acid chain; its full sequence is NADH-ubiquinone oxidoreductase chain 4L (98 aa).

3 consecutive transmembrane segments (helical) span residues 2-22 (PSIS…MLVF), 29-49 (SLLC…LFIM), and 61-81 (ILLL…LVMV).

The protein belongs to the complex I subunit 4L family. Core subunit of respiratory chain NADH dehydrogenase (Complex I) which is composed of 45 different subunits.

The protein resides in the mitochondrion inner membrane. The catalysed reaction is a ubiquinone + NADH + 5 H(+)(in) = a ubiquinol + NAD(+) + 4 H(+)(out). In terms of biological role, core subunit of the mitochondrial membrane respiratory chain NADH dehydrogenase (Complex I) which catalyzes electron transfer from NADH through the respiratory chain, using ubiquinone as an electron acceptor. Part of the enzyme membrane arm which is embedded in the lipid bilayer and involved in proton translocation. The polypeptide is NADH-ubiquinone oxidoreductase chain 4L (MT-ND4L) (Lepilemur mitsinjoensis (Mitsinjo sportive lemur)).